Reading from the N-terminus, the 176-residue chain is Large ribosomal subunit protein uL6 (176 aa).

Belongs to the universal ribosomal protein uL6 family. As to quaternary structure, part of the 50S ribosomal subunit.

This protein binds to the 23S rRNA, and is important in its secondary structure. It is located near the subunit interface in the base of the L7/L12 stalk, and near the tRNA binding site of the peptidyltransferase center. This is Large ribosomal subunit protein uL6 from Dechloromonas aromatica (strain RCB).